The primary structure comprises 485 residues: Adenosylhomocysteinase (485 aa).

Substrate-binding residues include threonine 64, aspartate 139, and glutamate 205. Threonine 206–threonine 208 serves as a coordination point for NAD(+). Positions 235 and 239 each coordinate substrate. NAD(+) contacts are provided by residues asparagine 240, glycine 269–glycine 274, glutamate 292, asparagine 327, isoleucine 348–histidine 350, and asparagine 397.

This sequence belongs to the adenosylhomocysteinase family. Homotetramer. The cofactor is NAD(+).

It carries out the reaction S-adenosyl-L-homocysteine + H2O = L-homocysteine + adenosine. It participates in amino-acid biosynthesis; L-homocysteine biosynthesis; L-homocysteine from S-adenosyl-L-homocysteine: step 1/1. In terms of biological role, adenosylhomocysteine is a competitive inhibitor of S-adenosyl-L-methionine-dependent methyl transferase reactions; therefore adenosylhomocysteinase may play a key role in the control of methylations via regulation of the intracellular concentration of adenosylhomocysteine. This is Adenosylhomocysteinase (SAHH) from Catharanthus roseus (Madagascar periwinkle).